The following is a 272-amino-acid chain: tRNA (guanine-N(7)-)-methyltransferase (272 aa).

The span at 1–20 (MSTDSESKRRAYREEKEGAR) shows a compositional bias: basic and acidic residues. Residues 1–43 (MSTDSESKRRAYREEKEGARKKSVKLAPEATPESKPDLPRKRY) form a disordered region. Residues glycine 89, 112–113 (EI), 148–149 (NA), and cysteine 168 contribute to the S-adenosyl-L-methionine site. Aspartate 171 is a catalytic residue. An S-adenosyl-L-methionine-binding site is contributed by 246–248 (TEE).

This sequence belongs to the class I-like SAM-binding methyltransferase superfamily. TrmB family. As to quaternary structure, forms a complex with TRM82.

It localises to the nucleus. It catalyses the reaction guanosine(46) in tRNA + S-adenosyl-L-methionine = N(7)-methylguanosine(46) in tRNA + S-adenosyl-L-homocysteine. Its pathway is tRNA modification; N(7)-methylguanine-tRNA biosynthesis. Catalyzes the formation of N(7)-methylguanine at position 46 (m7G46) in tRNA. The chain is tRNA (guanine-N(7)-)-methyltransferase from Meyerozyma guilliermondii (strain ATCC 6260 / CBS 566 / DSM 6381 / JCM 1539 / NBRC 10279 / NRRL Y-324) (Yeast).